Reading from the N-terminus, the 460-residue chain is Cytochrome P450 CYP71D312 (460 aa).

Cys-398 is a heme binding site.

It belongs to the cytochrome P450 family. It depends on heme as a cofactor.

Probable heme-thiolate monooxygenase. The chain is Cytochrome P450 CYP71D312 from Panax ginseng (Korean ginseng).